The sequence spans 54 residues: Large ribosomal subunit protein bL32 (54 aa).

The protein belongs to the bacterial ribosomal protein bL32 family.

The polypeptide is Large ribosomal subunit protein bL32 (Buchnera aphidicola subsp. Baizongia pistaciae (strain Bp)).